The sequence spans 370 residues: DNA replication and repair protein RecF (370 aa).

30–37 (GENAQGKT) serves as a coordination point for ATP.

The protein belongs to the RecF family.

The protein resides in the cytoplasm. In terms of biological role, the RecF protein is involved in DNA metabolism; it is required for DNA replication and normal SOS inducibility. RecF binds preferentially to single-stranded, linear DNA. It also seems to bind ATP. This chain is DNA replication and repair protein RecF, found in Listeria welshimeri serovar 6b (strain ATCC 35897 / DSM 20650 / CCUG 15529 / CIP 8149 / NCTC 11857 / SLCC 5334 / V8).